The sequence spans 172 residues: Large ribosomal subunit protein uL10 (172 aa).

This sequence belongs to the universal ribosomal protein uL10 family. As to quaternary structure, part of the ribosomal stalk of the 50S ribosomal subunit. The N-terminus interacts with L11 and the large rRNA to form the base of the stalk. The C-terminus forms an elongated spine to which L12 dimers bind in a sequential fashion forming a multimeric L10(L12)X complex.

Forms part of the ribosomal stalk, playing a central role in the interaction of the ribosome with GTP-bound translation factors. This chain is Large ribosomal subunit protein uL10, found in Methylobacterium radiotolerans (strain ATCC 27329 / DSM 1819 / JCM 2831 / NBRC 15690 / NCIMB 10815 / 0-1).